Consider the following 315-residue polypeptide: Lipoyl synthase (315 aa).

The segment at 1 to 33 (MADMPPVLRHPEKAHRPDQPQPKKPDWIRVKAP) is disordered. The segment covering 9–29 (RHPEKAHRPDQPQPKKPDWIR) has biased composition (basic and acidic residues). Residues Cys-54, Cys-59, Cys-65, Cys-80, Cys-84, Cys-87, and Ser-294 each coordinate [4Fe-4S] cluster. Positions 66 to 283 (WSQGHATMMI…EKAAYGKGFL (218 aa)) constitute a Radical SAM core domain.

It belongs to the radical SAM superfamily. Lipoyl synthase family. [4Fe-4S] cluster serves as cofactor.

It localises to the cytoplasm. It catalyses the reaction [[Fe-S] cluster scaffold protein carrying a second [4Fe-4S](2+) cluster] + N(6)-octanoyl-L-lysyl-[protein] + 2 oxidized [2Fe-2S]-[ferredoxin] + 2 S-adenosyl-L-methionine + 4 H(+) = [[Fe-S] cluster scaffold protein] + N(6)-[(R)-dihydrolipoyl]-L-lysyl-[protein] + 4 Fe(3+) + 2 hydrogen sulfide + 2 5'-deoxyadenosine + 2 L-methionine + 2 reduced [2Fe-2S]-[ferredoxin]. Its pathway is protein modification; protein lipoylation via endogenous pathway; protein N(6)-(lipoyl)lysine from octanoyl-[acyl-carrier-protein]: step 2/2. Catalyzes the radical-mediated insertion of two sulfur atoms into the C-6 and C-8 positions of the octanoyl moiety bound to the lipoyl domains of lipoate-dependent enzymes, thereby converting the octanoylated domains into lipoylated derivatives. In Paracoccus denitrificans (strain Pd 1222), this protein is Lipoyl synthase.